A 303-amino-acid polypeptide reads, in one-letter code: UDP-3-O-acyl-N-acetylglucosamine deacetylase (303 aa).

Zn(2+)-binding residues include H78, H237, and D241. H264 (proton donor) is an active-site residue.

Belongs to the LpxC family. Zn(2+) is required as a cofactor.

The enzyme catalyses a UDP-3-O-[(3R)-3-hydroxyacyl]-N-acetyl-alpha-D-glucosamine + H2O = a UDP-3-O-[(3R)-3-hydroxyacyl]-alpha-D-glucosamine + acetate. It participates in glycolipid biosynthesis; lipid IV(A) biosynthesis; lipid IV(A) from (3R)-3-hydroxytetradecanoyl-[acyl-carrier-protein] and UDP-N-acetyl-alpha-D-glucosamine: step 2/6. Its function is as follows. Catalyzes the hydrolysis of UDP-3-O-myristoyl-N-acetylglucosamine to form UDP-3-O-myristoylglucosamine and acetate, the committed step in lipid A biosynthesis. The protein is UDP-3-O-acyl-N-acetylglucosamine deacetylase of Xanthomonas oryzae pv. oryzae (strain MAFF 311018).